Here is a 278-residue protein sequence, read N- to C-terminus: Putative cuticle collagen 91 (278 aa).

Disordered stretches follow at residues Leu-84–Gly-109 and Gly-140–Gln-278. Residues Pro-89 to Ala-98 show a composition bias toward pro residues. Triple-helical region regions lie at residues Gly-91 to Ala-120, Gly-137 to Arg-199, and Gly-202 to Asp-264. Over residues Pro-99 to Gly-109 the composition is skewed to low complexity. Over residues Gly-158–Gly-167 the composition is skewed to gly residues. 2 stretches are compositionally biased toward low complexity: residues Glu-172–Pro-228 and Ala-236–Ala-245.

The protein belongs to the cuticular collagen family. Collagen polypeptide chains are complexed within the cuticle by disulfide bonds and other types of covalent cross-links.

Functionally, nematode cuticles are composed largely of collagen-like proteins. The cuticle functions both as an exoskeleton and as a barrier to protect the worm from its environment. The protein is Putative cuticle collagen 91 (col-91) of Caenorhabditis elegans.